The chain runs to 313 residues: Ribosomal RNA small subunit methyltransferase H (313 aa).

Residues 35–37, aspartate 55, phenylalanine 79, aspartate 101, and glutamine 108 contribute to the S-adenosyl-L-methionine site; that span reads GGH.

It belongs to the methyltransferase superfamily. RsmH family.

It is found in the cytoplasm. It catalyses the reaction cytidine(1402) in 16S rRNA + S-adenosyl-L-methionine = N(4)-methylcytidine(1402) in 16S rRNA + S-adenosyl-L-homocysteine + H(+). Functionally, specifically methylates the N4 position of cytidine in position 1402 (C1402) of 16S rRNA. The sequence is that of Ribosomal RNA small subunit methyltransferase H from Shigella flexneri serotype 5b (strain 8401).